Here is a 319-residue protein sequence, read N- to C-terminus: MSKEIFIGIDGGGTKTSTVAVDSNGQELARHTSPCSNYHSVGEDLAKAAINEGIKYVIRKVKETITDDDNKEVTVGSICLGMSGVDREKDKLLVKSWVTELLGESINYSIHNDAIVALSSGTQGKLFGVVIICGTGCISLGFNREGVSGRSGGWGPLLGDYGSGYQIGYDILRHVLKAKDQVGPKTSLTQVLLEKLQLTKEEDLISWAYDPKTQSWQKFAQLSPLAFEQAQLGDEISNLILVDAANALYDLINSVIKKLGLDKEEKFPLVYTGGNIERKGILSDLLSKKIMENYPNAEILNTTCDPSMGAALLALNSKK.

Residue Thr-14 participates in ATP binding. Residues Asn-37 and Asp-113 each contribute to the substrate site. Thr-135 lines the ATP pocket. Substrate contacts are provided by residues 153–155 (GWG) and Asp-160. ATP is bound at residue Ala-220.

The protein belongs to the eukaryotic-type N-acetylglucosamine kinase family. As to quaternary structure, homodimer.

The catalysed reaction is N-acetyl-D-glucosamine + ATP = N-acetyl-D-glucosamine 6-phosphate + ADP + H(+). In terms of biological role, converts N-acetylglucosamine (GlcNAc), a major component of complex carbohydrates, into GlcNAc 6-phosphate. Also has ManNAc kinase activity. The polypeptide is N-acetyl-D-glucosamine kinase (nagk) (Dictyostelium discoideum (Social amoeba)).